The chain runs to 1001 residues: Integrator complex subunit 7 (1001 aa).

The interval 980–1001 (DPSKQGAPAPSTSQAVGQTRRF) is disordered. A compositionally biased stretch (polar residues) spans 989 to 1001 (PSTSQAVGQTRRF).

Belongs to the Integrator subunit 7 family. In terms of assembly, belongs to the multiprotein complex Integrator, at least composed of IntS1, IntS2, IntS3, IntS4, omd/IntS5, IntS6, defl/IntS7, IntS8, IntS9, IntS10, IntS11, IntS12, asun/IntS13, IntS14 and IntS15. The core complex associates with protein phosphatase 2A subunits mts/PP2A and Pp2A-29B, to form the Integrator-PP2A (INTAC) complex.

The protein resides in the nucleus. The protein localises to the cytoplasm. Functionally, component of the integrator complex, a multiprotein complex that terminates RNA polymerase II (Pol II) transcription in the promoter-proximal region of genes. The integrator complex provides a quality checkpoint during transcription elongation by driving premature transcription termination of transcripts that are unfavorably configured for transcriptional elongation: the complex terminates transcription by (1) catalyzing dephosphorylation of the C-terminal domain (CTD) of Pol II subunit Polr2A/Rbp1 and Spt5, and (2) degrading the exiting nascent RNA transcript via endonuclease activity. The integrator complex is also involved in the 3'-end processing of the U7 snRNA, and also the spliceosomal snRNAs U1, U2, U4 and U5. This chain is Integrator complex subunit 7, found in Drosophila melanogaster (Fruit fly).